Here is a 221-residue protein sequence, read N- to C-terminus: Translation initiation factor 6 (221 aa).

The protein belongs to the eIF-6 family.

Functionally, binds to the 50S ribosomal subunit and prevents its association with the 30S ribosomal subunit to form the 70S initiation complex. This Methanocella arvoryzae (strain DSM 22066 / NBRC 105507 / MRE50) protein is Translation initiation factor 6.